We begin with the raw amino-acid sequence, 1179 residues long: Protein turtle homolog A (1179 aa).

The first 20 residues, M1–G20, serve as a signal peptide directing secretion. Over R21–P734 the chain is Extracellular. Ig-like domains are found at residues P24–N124, P136–T216, P226–T318, P322–T410, and P418–Y502. 2 disulfide bridges follow: C41–C108 and C158–C206. N-linked (GlcNAc...) asparagine glycans are attached at residues N188, N239, and N256. 3 cysteine pairs are disulfide-bonded: C248-C301, C344-C395, and C440-C486. Fibronectin type-III domains are found at residues S507–A611 and P623–L718. 2 N-linked (GlcNAc...) asparagine glycosylation sites follow: N513 and N524. Residues V735–L755 traverse the membrane as a helical segment. Over A756 to L1179 the chain is Cytoplasmic. The interval R767–Q807 is disordered. A compositionally biased stretch (low complexity) spans G785–S800. Phosphoserine is present on S809. Disordered stretches follow at residues L819–L842, P942–P974, and A1016–N1079. Residues L944–D954 show a composition bias toward pro residues. Positions S1020–G1029 are enriched in polar residues. The PDZ-binding signature appears at T1177 to L1179.

Belongs to the immunoglobulin superfamily. Turtle family. Interacts with MAGI2 and SHANK1. Expressed in both cell bodies and dendrites of cortical and hippocampal neurons and also cerebellar Purkinje cells (at protein level).

The protein resides in the cell membrane. The protein localises to the synapse. Its function is as follows. Functions in dendrite outgrowth and synapse maturation. The chain is Protein turtle homolog A (Igsf9) from Mus musculus (Mouse).